A 459-amino-acid polypeptide reads, in one-letter code: Protein maelstrom (459 aa).

The HMG box DNA-binding region spans A2 to N69. Residues N43–Q78 are disordered. The segment covering A63–Q78 has biased composition (basic and acidic residues).

Belongs to the maelstrom family. In terms of tissue distribution, in germaria and egg chambers, it is detected in the germline. In the germarium, it is in all regions, including region I where the germ cells are dividing. In early egg chambers, it is uniformly distributed throughout the nurse cells and oocyte but, by stage 5, it is most concentrated around the outer margins of the cells, closest to the periphery of the egg chamber. Level decreases in stages 5 and 6, but most noticeably in the oocyte, where protein level remains. No detectable protein from stage 8 onward (at protein level).

It is found in the cytoplasm. It localises to the nucleus. The protein resides in the perinuclear region. Its subcellular location is the cytoplasmic ribonucleoprotein granule. Functionally, involved both in the piRNA and miRNA metabolic processes. As a component of the meiotic nuage, plays a central role during oogenesis by repressing transposable elements and preventing their mobilization, which is essential for the germline integrity. Repression of transposable elements is mediated via the piRNA metabolic process, which mediates the repression of transposable elements during meiosis by forming complexes composed of piRNAs and Piwi proteins and governs the repression of transposons. As a nuclear component, it is required for proper differentiation in the germline stem cell (GSC) lineage by repressing microRNA-7 (miR-7), thereby acting as an indirect regulator of bag-of-marbles (Bam). Acts by binding to the promoter of miR-7 gene and repressing its expression; miR-7 repression alleviates the Bam repression by miR-7, thereby allowing differentiation in the germline stem cell (GSC) lineage. Indirectly required to position the microtubule organizing center in stage 2-6 oocytes. Involved in repression of long interspersed nuclear elements (LINEs) including HeT-A, I-element, TART and possibly mst40 LINEs; may have a role in production of piwi-interacting RNA (piRNA). The chain is Protein maelstrom from Drosophila melanogaster (Fruit fly).